A 336-amino-acid chain; its full sequence is RHOMBOID-like protein 12, mitochondrial (336 aa).

The N-terminal 85 residues, 1–85 (MKAIFNRRVV…RGFFASALGN (85 aa)), are a transit peptide targeting the mitochondrion. A run of 6 helical transmembrane segments spans residues 135 to 155 (VVLGLVIANAGVFVMWRVFNQ), 185 to 205 (IDIGHIVSNMIGLYFFGTSIA), 216 to 236 (LYLAGALGGSVFYLIHHAYMA), 254 to 274 (PGLGASGAVNAIMLLDIFLHP), 276 to 296 (ATLYLEFFIPVPAMLLGIFLI), and 307 to 327 (NSNISGSAHLGGAAVAAIAWA). Catalysis depends on S259, which acts as the Nucleophile. H315 (charge relay system) is an active-site residue.

Belongs to the peptidase S54 family.

The protein localises to the mitochondrion membrane. Probable rhomboid-type serine protease that catalyzes intramembrane proteolysis. Unable to cleave either of the yeast Pcp1 substrates in yeast cells. The sequence is that of RHOMBOID-like protein 12, mitochondrial from Arabidopsis thaliana (Mouse-ear cress).